The primary structure comprises 89 residues: Small ribosomal subunit protein uS14 (89 aa).

This sequence belongs to the universal ribosomal protein uS14 family. Part of the 30S ribosomal subunit. Contacts proteins S3 and S10.

Its function is as follows. Binds 16S rRNA, required for the assembly of 30S particles and may also be responsible for determining the conformation of the 16S rRNA at the A site. This chain is Small ribosomal subunit protein uS14, found in Oenococcus oeni (strain ATCC BAA-331 / PSU-1).